The sequence spans 130 residues: Small ribosomal subunit protein bS6 (130 aa).

Residues 100-130 (SPMVKAKDERRERREDFAEAGDDVDAGDSEE) are disordered. The segment covering 104–116 (KAKDERRERREDF) has biased composition (basic and acidic residues). Over residues 117–130 (AEAGDDVDAGDSEE) the composition is skewed to acidic residues.

The protein belongs to the bacterial ribosomal protein bS6 family.

In terms of biological role, binds together with bS18 to 16S ribosomal RNA. The sequence is that of Small ribosomal subunit protein bS6 from Pectobacterium carotovorum subsp. carotovorum (strain PC1).